The sequence spans 638 residues: Stress-activated protein kinase alpha (638 aa).

ANK repeat units follow at residues 43 to 72 (YGQS…TLKA), 80 to 109 (NGFS…NVDV), 113 to 146 (DLNT…NVNA), 150 to 181 (NGET…NVNL), 185 to 214 (FQES…DVDC), and 219 to 248 (ERKT…LFDW). One can recognise an SAM domain in the interval 240–303 (KKYKDLFDWL…LKETSNLANE (64 aa)). Residues 351–620 (LEYTEKLGAG…RLVTIENEYR (270 aa)) form the Protein kinase domain. ATP-binding positions include 357–365 (LGAGSSGKV) and K378. D472 serves as the catalytic Proton acceptor.

The protein belongs to the protein kinase superfamily. TKL Ser/Thr protein kinase family. As to quaternary structure, interacts with F-actin. In terms of processing, autophosphorylated.

The protein localises to the cytoplasm. It is found in the cytoskeleton. It carries out the reaction L-seryl-[protein] + ATP = O-phospho-L-seryl-[protein] + ADP + H(+). The catalysed reaction is L-threonyl-[protein] + ATP = O-phospho-L-threonyl-[protein] + ADP + H(+). Functionally, may be involved in cortical F-actin organization and resistance to osmotic stress. Activated upon cell detachment, in vitro. In Dictyostelium discoideum (Social amoeba), this protein is Stress-activated protein kinase alpha (spkA-1).